A 540-amino-acid chain; its full sequence is Phosphomethylpyrimidine synthase (540 aa).

Residues asparagine 143, methionine 172, tyrosine 201, histidine 237, 257–259 (SRG), 298–301 (DGLR), and glutamate 337 contribute to the substrate site. Histidine 341 is a Zn(2+) binding site. Tyrosine 364 is a substrate binding site. Zn(2+) is bound at residue histidine 405. [4Fe-4S] cluster is bound by residues cysteine 485, cysteine 488, and cysteine 493.

It belongs to the ThiC family. [4Fe-4S] cluster is required as a cofactor.

It catalyses the reaction 5-amino-1-(5-phospho-beta-D-ribosyl)imidazole + S-adenosyl-L-methionine = 4-amino-2-methyl-5-(phosphooxymethyl)pyrimidine + CO + 5'-deoxyadenosine + formate + L-methionine + 3 H(+). It participates in cofactor biosynthesis; thiamine diphosphate biosynthesis. In terms of biological role, catalyzes the synthesis of the hydroxymethylpyrimidine phosphate (HMP-P) moiety of thiamine from aminoimidazole ribotide (AIR) in a radical S-adenosyl-L-methionine (SAM)-dependent reaction. In Mycobacterium avium (strain 104), this protein is Phosphomethylpyrimidine synthase.